The sequence spans 660 residues: RNA polymerase II-associated protein 3 (660 aa).

At T2 the chain carries N-acetylthreonine. The TPR 1 repeat unit spans residues 8–41 (VELQLQVKHNAEELQDFMRDLEHWEKDMKEKDLE). Residues 42–83 (LRRQGGVAEENLPPIRNGNFRKKKKKGKAKESSRKTKEENTK) are disordered. A compositionally biased stretch (basic residues) spans 60–69 (NFRKKKKKGK). Over residues 70 to 83 (AKESSRKTKEENTK) the composition is skewed to basic and acidic residues. Residues S88, S117, S120, and S122 each carry the phosphoserine modification. The tract at residues 109-128 (EDSTHDSLSQESESDEDGIR) is disordered. TPR repeat units lie at residues 134-167 (ALVLKEKGNKYFKQGKYDEAIECYTKGMDADPYN), 169-201 (VLPTNRASAYFRLKKFAVAESDCNLAIALSRTY), and 202-235 (TKAYARRGAARFALQKLEDARKDYEKVLELEPDN). The tract at residues 250-283 (TSKENSGPGAAAAAESKPAAGESKPTGGQQGRQK) is disordered. Over residues 252-273 (KENSGPGAAAAAESKPAAGESK) the composition is skewed to low complexity. 3 TPR repeats span residues 284–317 (AIAEKDLGNGFFKEGKYEQAIECYTRGIAADRTN), 319–351 (LLPANRAMAYLKIQRYEEAERDCTQAIVLDGSY), and 352–385 (SKAFARRGTARTFLGKINEAKQDFETVLLLEPGN). The disordered stretch occupies residues 449 to 485 (DAPDSSATVPESDRATAAVGTGTKKNPSEGVSLPAGD). At S476 the chain carries Phosphoserine. K493 is covalently cross-linked (Glycyl lysine isopeptide (Lys-Gly) (interchain with G-Cter in SUMO2)).

The protein belongs to the RPAP3 family. As to quaternary structure, tightly associated with the RNA polymerase II complex. Component of the R2TP complex composed at least of RUVBL1, RUVBL2, RPAP3 and PIHD1. Component of the PAQosome complex which is responsible for the biogenesis of several protein complexes and which consists of R2TP complex members RUVBL1, RUVBL2, RPAP3 and PIH1D1, URI complex members PFDN2, PFDN6, PDRG1, UXT and URI1 as well as ASDURF, POLR2E and DNAAF10/WDR92. Interacts with PIH1D1. Interacts with TSC1 and TSC2. Interacts with PRPF8 and EFTUD2 in a ZNHIT2-dependent manner.

In terms of biological role, forms an interface between the RNA polymerase II enzyme and chaperone/scaffolding protein, suggesting that it is required to connect RNA polymerase II to regulators of protein complex formation. The polypeptide is RNA polymerase II-associated protein 3 (Rpap3) (Mus musculus (Mouse)).